A 598-amino-acid polypeptide reads, in one-letter code: MGIPADNLQSRAKASFDTRVAAAELALNRGVVPSFANGEELLYRNPDPDNTDPSFIASFTKGLPHDDNGAIIDPDDFLAFVRAINSGDEKEIADLTLGPARDPETGLPIWRSDLANSLELEVRGWENSSAGLTFDLEGPDAQSIAMPPAPVLTSPELVAEIAELYLMALGREIEFSEFDSPKNAEYIQFAIDQLNGLEWFNTPAKLGDPPAEIRRRRGEVTVGNLFRGILPGSEVGPYLSQYIIVGSKQIGSATVGNKTLVSPNAADEFDGEIAYGSITISQRVRIATPGRDFMTDLKVFLDVQDAADFRGFESYEPGARLIRTIRDLATWVHFDALYEAYLNACLILLANGVPFDPNLPFQQEDKLDNQDVFVNFGSAHVLSLVTEVATRALKAVRYQKFNIHRRLRPEATGGLISVNKIAPQKGESIFPEVDLAVEELGDILEKAEISNRKQNIADGDPDPDPSFLLPMAFAEGSPFHPSYGSGHAVVAGACVTILKAFFDSGIEIDQVFEVDKDEDKLVKSSFKGTLTVAGELNKLADNIAIGRNMAGVHYFSDQFESLLLGEQVAIGILEEQSLTYGENFFFNLPKFDGTTIQI.

Residues Phe-361, Gln-363, Asp-365, Asp-368, and Gln-370 each coordinate Ca(2+). 2 residues coordinate vanadate: Lys-400 and Arg-408. Residue His-480 is part of the active site. Vanadate is bound by residues Ser-485, Gly-486, His-487, Arg-547, and His-553. The active site involves His-487.

Belongs to the vanadium-dependent haloperoxidase family. As to quaternary structure, homododecamer. Ca(2+) serves as cofactor. Requires vanadate as cofactor.

It carries out the reaction RH + Br(-) + H2O2 = RBr + 2 H2O.. In terms of biological role, catalyzes the halogenation of organic substrates in the presence of hydrogen peroxide. The polypeptide is Vanadium-dependent bromoperoxidase (Corallina pilulifera (Red coralline alga)).